Here is a 299-residue protein sequence, read N- to C-terminus: Oxygen-dependent coproporphyrinogen-III oxidase (299 aa).

Ser92 serves as a coordination point for substrate. Residues His96 and His106 each contribute to the Mn(2+) site. The Proton donor role is filled by His106. Asn108–Arg110 contacts substrate. Residues His145 and His175 each coordinate Mn(2+). The tract at residues Tyr240–Glu275 is important for dimerization. Gly258–Arg260 lines the substrate pocket.

Belongs to the aerobic coproporphyrinogen-III oxidase family. As to quaternary structure, homodimer. It depends on Mn(2+) as a cofactor.

It localises to the cytoplasm. The catalysed reaction is coproporphyrinogen III + O2 + 2 H(+) = protoporphyrinogen IX + 2 CO2 + 2 H2O. It participates in porphyrin-containing compound metabolism; protoporphyrin-IX biosynthesis; protoporphyrinogen-IX from coproporphyrinogen-III (O2 route): step 1/1. Involved in the heme biosynthesis. Catalyzes the aerobic oxidative decarboxylation of propionate groups of rings A and B of coproporphyrinogen-III to yield the vinyl groups in protoporphyrinogen-IX. This Escherichia coli (strain K12 / MC4100 / BW2952) protein is Oxygen-dependent coproporphyrinogen-III oxidase.